Consider the following 216-residue polypeptide: GTP cyclohydrolase 1 (216 aa).

Zn(2+) is bound by residues Cys-108, His-111, and Cys-179.

It belongs to the GTP cyclohydrolase I family. As to quaternary structure, toroid-shaped homodecamer, composed of two pentamers of five dimers.

The enzyme catalyses GTP + H2O = 7,8-dihydroneopterin 3'-triphosphate + formate + H(+). The protein operates within cofactor biosynthesis; 7,8-dihydroneopterin triphosphate biosynthesis; 7,8-dihydroneopterin triphosphate from GTP: step 1/1. The sequence is that of GTP cyclohydrolase 1 from Shewanella sp. (strain MR-7).